The chain runs to 598 residues: Ecto-NOX disulfide-thiol exchanger 2 (598 aa).

In terms of domain architecture, RRM spans 99 to 178; it reads KTVFVGGLPE…GRLHVDFAQA (80 aa). Coiled coils occupy residues 264–299 and 352–476; these read IQSANSHVRRLVNEKATHEKEMEEAKEKFKQALSGI and RREE…KQEN.

The protein belongs to the ENOX family. Cu cation serves as cofactor. In terms of processing, glycosylated.

It is found in the cell membrane. The protein localises to the secreted. It localises to the extracellular space. With respect to regulation, inhibited by the antitumor sulfonylurea LY181984, the vabilloid capsaicin, and retinoids. Functionally, may be involved in cell growth. Probably acts as a terminal oxidase of plasma electron transport from cytosolic NAD(P)H via hydroquinones to acceptors at the cell surface. Hydroquinone oxidase activity alternates with a protein disulfide-thiol interchange/oxidoreductase activity which may control physical membrane displacements associated with vesicle budding or cell enlargement. The activities oscillate with a period length of 22 minutes and play a role in control of the ultradian cellular biological clock. This Mus musculus (Mouse) protein is Ecto-NOX disulfide-thiol exchanger 2 (Enox2).